A 342-amino-acid chain; its full sequence is MAPSFEEPTVALGAASKAAPKLVAPEPEHCPGPESEQAGKGDACAGCPNQSICASAPKGPDPDIPIITARLSSIRHKILVLSGKGGVGKSTFTSLLANAFASNPDSTVGVMDTDICGPSIPKMMDVETETIHVSNAGWNPVWVSDNLAVMSVQFMLPNRDDAVIWRGPKKNGLIKQFLKDVEWGELDYLIVDTPPGTSDEHLSVNSFLKESGVDGAVLVTTPQEVSLLDVRKEIDFCRKAGIRILGLVENMSGFVCPKCTHESQIFKPTTGGGGRLAADMGIPFLGSVPLDPRVGMACDYGENFMDRYPESPASMALRKVVRTISRQVGEDPDEVLPETDAV.

Residues serine 16 to aspartate 42 form a disordered region. The [4Fe-4S] cluster site is built by cysteine 30, cysteine 44, cysteine 47, and cysteine 53. ATP is bound at residue glycine 83 to serine 90. Residues cysteine 256 and cysteine 259 each coordinate [4Fe-4S] cluster.

Belongs to the Mrp/NBP35 ATP-binding proteins family. NUBP1/NBP35 subfamily. Heterotetramer of 2 NBP35 and 2 CFD1 chains. [4Fe-4S] cluster serves as cofactor.

It is found in the cytoplasm. Its function is as follows. Component of the cytosolic iron-sulfur (Fe/S) protein assembly (CIA) machinery. Required for maturation of extramitochondrial Fe-S proteins. The NBP35-CFD1 heterotetramer forms a Fe-S scaffold complex, mediating the de novo assembly of an Fe-S cluster and its transfer to target apoproteins. The protein is Cytosolic Fe-S cluster assembly factor NBP35 of Coccidioides immitis (strain RS) (Valley fever fungus).